Reading from the N-terminus, the 584-residue chain is BEL1-like homeodomain protein 8 (584 aa).

The SR/KY domain stretch occupies residues 266–282 (SRFLEPAQKMLEEFCIS). The segment at 292–317 (ESTSMEDDDDDDDNLSGFSSSSEPLE) is disordered. The span at 295–305 (SMEDDDDDDDN) shows a compositional bias: acidic residues. Residues 316-387 (LEPKNRLKKA…ALRTAIAEHV (72 aa)) form a BELL domain region. The segment at residues 424–486 (IWRPQRGLPE…NARVRLWKPM (63 aa)) is a DNA-binding region (homeobox). A disordered region spans residues 503 to 529 (TSHNIEPSNRPNTVSSPSHEQTLTGLS).

The protein belongs to the TALE/BELL homeobox family. May form heterodimeric complex with the TALE/KNOX proteins STM and KNAT1/BP.

It is found in the nucleus. In terms of biological role, required for specifying floral primordia and establishing early internode patterning events during inflorescence development. The sequence is that of BEL1-like homeodomain protein 8 (BLH8) from Arabidopsis thaliana (Mouse-ear cress).